Here is a 265-residue protein sequence, read N- to C-terminus: Hydroxyethylthiazole kinase (265 aa).

M41 contributes to the substrate binding site. Residues R117 and S163 each contribute to the ATP site. G190 contacts substrate.

It belongs to the Thz kinase family. Mg(2+) is required as a cofactor.

The catalysed reaction is 5-(2-hydroxyethyl)-4-methylthiazole + ATP = 4-methyl-5-(2-phosphooxyethyl)-thiazole + ADP + H(+). Its pathway is cofactor biosynthesis; thiamine diphosphate biosynthesis; 4-methyl-5-(2-phosphoethyl)-thiazole from 5-(2-hydroxyethyl)-4-methylthiazole: step 1/1. Its function is as follows. Catalyzes the phosphorylation of the hydroxyl group of 4-methyl-5-beta-hydroxyethylthiazole (THZ). The protein is Hydroxyethylthiazole kinase of Pediococcus pentosaceus (strain ATCC 25745 / CCUG 21536 / LMG 10740 / 183-1w).